Reading from the N-terminus, the 317-residue chain is MYNYLDFEKPVADLEGQILELKKLAQEQGSVEMGDEISRLEKRSADALKDIYRKLTPWQKAQIARHPDRPHCLEYIDRLFTEFTPLAGDRKFANDEALQAGFGRFNGTPVAIIGQEKGSDTKTRLKHNFGSARPEGYRKAVRIMEMADRFQLPLITFVDTAGAYPGVSAEERGQAEAIARSTAECLKLRVPVISIIIGEGGSGGAIAIAVANRVYMLEHSIYSVISPEGAASILWHDSTRAKDAASDMRITAQDLFDLKIIDGIIPEPLGGAHRGKESVIDATGDIIAASLRSMKDIDGETLKQERRQKFLEIGRNI.

In terms of domain architecture, CoA carboxyltransferase C-terminal spans 40–293 (LEKRSADALK…GDIIAASLRS (254 aa)).

It belongs to the AccA family. Acetyl-CoA carboxylase is a heterohexamer composed of biotin carboxyl carrier protein (AccB), biotin carboxylase (AccC) and two subunits each of ACCase subunit alpha (AccA) and ACCase subunit beta (AccD).

It is found in the cytoplasm. It catalyses the reaction N(6)-carboxybiotinyl-L-lysyl-[protein] + acetyl-CoA = N(6)-biotinyl-L-lysyl-[protein] + malonyl-CoA. Its pathway is lipid metabolism; malonyl-CoA biosynthesis; malonyl-CoA from acetyl-CoA: step 1/1. In terms of biological role, component of the acetyl coenzyme A carboxylase (ACC) complex. First, biotin carboxylase catalyzes the carboxylation of biotin on its carrier protein (BCCP) and then the CO(2) group is transferred by the carboxyltransferase to acetyl-CoA to form malonyl-CoA. The protein is Acetyl-coenzyme A carboxylase carboxyl transferase subunit alpha of Brucella canis (strain ATCC 23365 / NCTC 10854 / RM-666).